Consider the following 372-residue polypeptide: Delta-type opioid receptor (372 aa).

The Extracellular segment spans residues M1–A47. 2 N-linked (GlcNAc...) asparagine glycosylation sites follow: N18 and N33. Residues L48–V75 traverse the membrane as a helical segment. Topologically, residues R76–N85 are cytoplasmic. Residues I86–L110 traverse the membrane as a helical segment. Topologically, residues M111–K122 are extracellular. C121 and C198 are disulfide-bonded. Residues A123–V144 form a helical membrane-spanning segment. The Cytoplasmic portion of the chain corresponds to D145–A163. The chain crosses the membrane as a helical span at residues K164–M186. Residues A187–S206 are Extracellular-facing. A helical membrane pass occupies residues W207–L238. Residues R239 to R261 are Cytoplasmic-facing. A helical membrane pass occupies residues M262–W284. Topologically, residues T285 to A299 are extracellular. Residues L300 to L321 form a helical membrane-spanning segment. At D322–A372 the chain is on the cytoplasmic side. Residue C333 is the site of S-palmitoyl cysteine attachment. The interval P340 to A372 is disordered. Over residues R347–V357 the composition is skewed to basic and acidic residues.

It belongs to the G-protein coupled receptor 1 family. May form homooligomers. Forms a heterodimer with OPRM1. Interacts with GPRASP1. Interacts with RTP4; the interaction promotes cell surface localization of the OPRD1-OPRM1 heterodimer. N-glycosylated. Post-translationally, ubiquitinated. A basal ubiquitination seems not to be related to degradation. Ubiquitination is increased upon formation of OPRM1:OPRD1 oligomers leading to proteasomal degradation; the ubiquitination is diminished by RTP4. Detected in oocytes (at protein level). Detected in brain cortex, hypothalamus, hippocampus and olfactory bulb. Detected in oocytes.

It is found in the cell membrane. Its function is as follows. G-protein coupled receptor that functions as a receptor for endogenous enkephalins and for a subset of other opioids. Ligand binding causes a conformation change that triggers signaling via guanine nucleotide-binding proteins (G proteins) and modulates the activity of down-stream effectors, such as adenylate cyclase. Signaling leads to the inhibition of adenylate cyclase activity. Inhibits neurotransmitter release by reducing calcium ion currents and increasing potassium ion conductance. Plays a role in the perception of pain and in opiate-mediated analgesia. Plays a role in developing analgesic tolerance to morphine. This chain is Delta-type opioid receptor (OPRD1), found in Homo sapiens (Human).